The sequence spans 255 residues: EEF1A lysine methyltransferase 4 (255 aa).

Residues Trp-26 and Tyr-30 each coordinate S-adenosyl-L-methionine. Phosphotyrosine is present on Tyr-39. S-adenosyl-L-methionine is bound by residues Trp-41, Gly-66, 88–89, 113–114, and Lys-130; these read DY and DV. The Required for methyltransferase activity signature appears at 129 to 134; it reads EKGTLD.

The protein belongs to the methyltransferase superfamily.

It catalyses the reaction L-lysyl-[protein] + S-adenosyl-L-methionine = N(6)-methyl-L-lysyl-[protein] + S-adenosyl-L-homocysteine + H(+). The enzyme catalyses N(6)-methyl-L-lysyl-[protein] + S-adenosyl-L-methionine = N(6),N(6)-dimethyl-L-lysyl-[protein] + S-adenosyl-L-homocysteine + H(+). The catalysed reaction is N(6),N(6)-dimethyl-L-lysyl-[protein] + S-adenosyl-L-methionine = N(6),N(6),N(6)-trimethyl-L-lysyl-[protein] + S-adenosyl-L-homocysteine + H(+). Its function is as follows. Protein-lysine methyltransferase that efficiently catalyzes three successive methylations on 'Lys-36' in eukaryotic translation elongation factor 1 alpha (EEF1A1 or EEF1A2). The protein is EEF1A lysine methyltransferase 4 of Mus musculus (Mouse).